The following is a 29-amino-acid chain: Cyclotide mobo-A (29 aa).

A cross-link (cyclopeptide (Gly-Asn)) is located at residues 1–29 (GFPTCGETCTLGTCNTPGCTCSWPICTRN). 3 cysteine pairs are disulfide-bonded: cysteine 5-cysteine 19, cysteine 9-cysteine 21, and cysteine 14-cysteine 26.

The protein belongs to the cyclotide family. Moebius subfamily. This is a cyclic peptide.

In terms of biological role, probably participates in a plant defense mechanism. In Melicytus obovatus (Hymenanthera obovata), this protein is Cyclotide mobo-A.